Here is a 320-residue protein sequence, read N- to C-terminus: Dimethyladenosine transferase (320 aa).

6 residues coordinate S-adenosyl-L-methionine: His38, Leu40, Gly65, Glu86, Asp114, and Asn129.

Belongs to the class I-like SAM-binding methyltransferase superfamily. rRNA adenine N(6)-methyltransferase family.

It catalyses the reaction adenosine(1779)/adenosine(1780) in 18S rRNA + 4 S-adenosyl-L-methionine = N(6)-dimethyladenosine(1779)/N(6)-dimethyladenosine(1780) in 18S rRNA + 4 S-adenosyl-L-homocysteine + 4 H(+). Functionally, specifically dimethylates two adjacent adenosines in the loop of a conserved hairpin near the 3'-end of 18S rRNA in the 40S particle. In Kluyveromyces lactis (strain ATCC 8585 / CBS 2359 / DSM 70799 / NBRC 1267 / NRRL Y-1140 / WM37) (Yeast), this protein is Dimethyladenosine transferase (DIM1).